Consider the following 523-residue polypeptide: UPF0329 protein ECU02_0050 (523 aa).

Residues 326–386 (EEKAKSKKRG…KTGKKSEGGR (61 aa)) are disordered. Positions 330-339 (KSKKRGKRKS) are enriched in basic residues. Residues 344–353 (EAKEEEKKES) show a composition bias toward basic and acidic residues. The segment covering 354–368 (ETEEVEAGEEVEMPS) has biased composition (acidic residues).

Belongs to the UPF0329 family.

The sequence is that of UPF0329 protein ECU02_0050 from Encephalitozoon cuniculi (strain GB-M1) (Microsporidian parasite).